Consider the following 197-residue polypeptide: Auxin-responsive protein IAA19 (197 aa).

Residues 13–17 (LRLGL) carry the EAR-like (transcriptional repression) motif. The span at 35–47 (MNMTSSGSNSDQC) shows a compositional bias: polar residues. Residues 35–67 (MNMTSSGSNSDQCESGVVSSGGDAEKVNDSPAA) form a disordered region. Residues 96-184 (LGYVKVSMDG…KRLRIMKRSD (89 aa)) form the PB1 domain.

This sequence belongs to the Aux/IAA family. Homodimers and heterodimers. Interacts with the auxin response factor ARF7.

The protein localises to the nucleus. Aux/IAA proteins are short-lived transcriptional factors that function as repressors of early auxin response genes at low auxin concentrations. Repression is thought to result from the interaction with auxin response factors (ARFs), proteins that bind to the auxin-responsive promoter element (AuxRE). Formation of heterodimers with ARF proteins may alter their ability to modulate early auxin response genes expression. This is Auxin-responsive protein IAA19 (IAA19) from Arabidopsis thaliana (Mouse-ear cress).